The primary structure comprises 468 residues: 3-isopropylmalate dehydratase large subunit (468 aa).

[4Fe-4S] cluster contacts are provided by cysteine 346, cysteine 406, and cysteine 409.

Belongs to the aconitase/IPM isomerase family. LeuC type 1 subfamily. As to quaternary structure, heterodimer of LeuC and LeuD. [4Fe-4S] cluster is required as a cofactor.

The catalysed reaction is (2R,3S)-3-isopropylmalate = (2S)-2-isopropylmalate. It participates in amino-acid biosynthesis; L-leucine biosynthesis; L-leucine from 3-methyl-2-oxobutanoate: step 2/4. In terms of biological role, catalyzes the isomerization between 2-isopropylmalate and 3-isopropylmalate, via the formation of 2-isopropylmaleate. In Cyanothece sp. (strain PCC 7425 / ATCC 29141), this protein is 3-isopropylmalate dehydratase large subunit.